The sequence spans 863 residues: DNA mismatch repair protein MutS (863 aa).

G607–S614 contacts ATP.

It belongs to the DNA mismatch repair MutS family.

Its function is as follows. This protein is involved in the repair of mismatches in DNA. It is possible that it carries out the mismatch recognition step. This protein has a weak ATPase activity. This is DNA mismatch repair protein MutS from Caldicellulosiruptor bescii (strain ATCC BAA-1888 / DSM 6725 / KCTC 15123 / Z-1320) (Anaerocellum thermophilum).